A 317-amino-acid polypeptide reads, in one-letter code: Putative AP2/ERF and B3 domain-containing protein Os01g0140700 (317 aa).

A disordered region spans residues 1–37 (MEQEAAMVVFSCNSGSGGSSSTTDSKQEEEEEEELAA). Residues 27–37 (QEEEEEEELAA) are compositionally biased toward acidic residues. A DNA-binding region (AP2/ERF) is located at residues 66–121 (RYKGVVPQPNGRWGAQIYERHARVWLGTFPDEEAAARAYDVAALRFRGRDAVTNRA). The segment at residues 178 to 287 (FEKAVTPSDV…EKHLLIDCKK (110 aa)) is a DNA-binding region (TF-B3).

Its subcellular location is the nucleus. The chain is Putative AP2/ERF and B3 domain-containing protein Os01g0140700 from Oryza sativa subsp. japonica (Rice).